Consider the following 362-residue polypeptide: Putative G-protein coupled receptor B0244.5 (362 aa).

At 1–47 (MQNIFENCSYHSKYEPYFLNCTNTTNQCVLIQDVGIIQAIDFWANLC) the chain is on the extracellular side. Asparagine 7, asparagine 20, and asparagine 23 each carry an N-linked (GlcNAc...) asparagine glycan. Residues 48–68 (IPFTLFVIAFILNGYYLSILI) traverse the membrane as a helical segment. The Cytoplasmic segment spans residues 69 to 81 (PEFRKMNDTTKKQ). Residues 82–102 (YIFVVSRGISSLSASSIMMVL) traverse the membrane as a helical segment. The Extracellular segment spans residues 103 to 125 (RLLKMLSTSFTVYFLFFLIDDLS). A helical transmembrane segment spans residues 126–145 (FYSLLGSYVGSTLLLYLATV). The Cytoplasmic segment spans residues 146 to 161 (RPIFYSIQISVRIVYK). The chain crosses the membrane as a helical span at residues 162-182 (FALVNVLLAVVLAVTTAIFQA). Topologically, residues 183–204 (AEVSDGFFHCDVQHCQPIINIA) are extracellular. The chain crosses the membrane as a helical span at residues 205-225 (MFVIIATSFLIPIITLTFVLV). At 226–255 (TLCFQKSRTQSIGNFTVDNSVYKSARTRLA) the chain is on the cytoplasmic side. A helical transmembrane segment spans residues 256–276 (WTLFTFTLISLTEMIPSSFLV). Residues 277 to 295 (NLRVEDTITICVNFYQADH) lie on the Extracellular side of the membrane. A helical transmembrane segment spans residues 296 to 316 (LFIPAIMNSFQTLAWGIALIV). Residues 317–362 (DPLCALLFDPRIRKVWVEHVSRLSIIIGRSFEACCHSNLNKEIQDK) lie on the Cytoplasmic side of the membrane.

The protein belongs to the G-protein coupled receptor 1 family. B0244 subfamily.

The protein localises to the cell membrane. This chain is Putative G-protein coupled receptor B0244.5, found in Caenorhabditis elegans.